A 436-amino-acid polypeptide reads, in one-letter code: Methylenetetrahydrofolate--tRNA-(uracil-5-)-methyltransferase TrmFO (436 aa).

8 to 13 is a binding site for FAD; sequence GAGLAG.

The protein belongs to the MnmG family. TrmFO subfamily. FAD serves as cofactor.

The protein localises to the cytoplasm. The enzyme catalyses uridine(54) in tRNA + (6R)-5,10-methylene-5,6,7,8-tetrahydrofolate + NADH + H(+) = 5-methyluridine(54) in tRNA + (6S)-5,6,7,8-tetrahydrofolate + NAD(+). The catalysed reaction is uridine(54) in tRNA + (6R)-5,10-methylene-5,6,7,8-tetrahydrofolate + NADPH + H(+) = 5-methyluridine(54) in tRNA + (6S)-5,6,7,8-tetrahydrofolate + NADP(+). Catalyzes the folate-dependent formation of 5-methyl-uridine at position 54 (M-5-U54) in all tRNAs. The protein is Methylenetetrahydrofolate--tRNA-(uracil-5-)-methyltransferase TrmFO of Persephonella marina (strain DSM 14350 / EX-H1).